A 213-amino-acid chain; its full sequence is Adenylate kinase (213 aa).

An ATP-binding site is contributed by 10 to 15 (GAGKGT). The segment at 30 to 59 (STGDMFRAAMANQTEMGILAKSYIDKGDLV) is NMP. Residues T31, R36, 57-59 (DLV), 86-89 (GYPR), and Q93 each bind AMP. Positions 127–160 (GRIIHKETGETFHKVFNPPVGDYKEEDFYQREDD) are LID. ATP-binding positions include R128 and 137 to 138 (TF). AMP contacts are provided by R157 and R168. Position 196 (Q196) interacts with ATP.

It belongs to the adenylate kinase family. Monomer.

It is found in the cytoplasm. The enzyme catalyses AMP + ATP = 2 ADP. The protein operates within purine metabolism; AMP biosynthesis via salvage pathway; AMP from ADP: step 1/1. Catalyzes the reversible transfer of the terminal phosphate group between ATP and AMP. Plays an important role in cellular energy homeostasis and in adenine nucleotide metabolism. In Streptococcus suis (strain 98HAH33), this protein is Adenylate kinase.